A 306-amino-acid chain; its full sequence is Phosphatidylserine decarboxylase proenzyme (306 aa).

Residues D98, H155, and S259 each act as charge relay system; for autoendoproteolytic cleavage activity in the active site. S259 serves as the catalytic Schiff-base intermediate with substrate; via pyruvic acid; for decarboxylase activity. Residue S259 is modified to Pyruvic acid (Ser); by autocatalysis.

The protein belongs to the phosphatidylserine decarboxylase family. PSD-B subfamily. Prokaryotic type I sub-subfamily. Heterodimer of a large membrane-associated beta subunit and a small pyruvoyl-containing alpha subunit. Pyruvate is required as a cofactor. Post-translationally, is synthesized initially as an inactive proenzyme. Formation of the active enzyme involves a self-maturation process in which the active site pyruvoyl group is generated from an internal serine residue via an autocatalytic post-translational modification. Two non-identical subunits are generated from the proenzyme in this reaction, and the pyruvate is formed at the N-terminus of the alpha chain, which is derived from the carboxyl end of the proenzyme. The autoendoproteolytic cleavage occurs by a canonical serine protease mechanism, in which the side chain hydroxyl group of the serine supplies its oxygen atom to form the C-terminus of the beta chain, while the remainder of the serine residue undergoes an oxidative deamination to produce ammonia and the pyruvoyl prosthetic group on the alpha chain. During this reaction, the Ser that is part of the protease active site of the proenzyme becomes the pyruvoyl prosthetic group, which constitutes an essential element of the active site of the mature decarboxylase.

The protein resides in the cell membrane. The catalysed reaction is a 1,2-diacyl-sn-glycero-3-phospho-L-serine + H(+) = a 1,2-diacyl-sn-glycero-3-phosphoethanolamine + CO2. The protein operates within phospholipid metabolism; phosphatidylethanolamine biosynthesis; phosphatidylethanolamine from CDP-diacylglycerol: step 2/2. Functionally, catalyzes the formation of phosphatidylethanolamine (PtdEtn) from phosphatidylserine (PtdSer). In Nitrosococcus oceani (strain ATCC 19707 / BCRC 17464 / JCM 30415 / NCIMB 11848 / C-107), this protein is Phosphatidylserine decarboxylase proenzyme.